We begin with the raw amino-acid sequence, 454 residues long: MGRTYIVEETVGQYLSNINLQGKAFVSGLLIGQCSSQKDYVILATRTPPKEEQSENLKHPKAKLDNLDEEWATEHACQVSRMLPGGLLVLGVFIITTLELANDFQNALRRLMFAVEKSINRKRLWNFTEEEVSERVTLHICASTKKIFCRTYDIHDPKSSARPADWKYQSGLSSSWLSLECTVHINIHIPLSATSVSYTLEKNTKNGLTRWAKEIENGVYLINGQVKDEDCDLLEGQKKSSRGNTQATSHSFDVRVLTQLLLNSDHRSTATVQICSGSVNLKGAVKCRAYIHSSKPKVKDAVQAVKRDILNTVADRCEMLFEDLLLNEIPEKKDSEKEFHVLPYRVFVPLPGSTVMLCDYKFDDESAEEIRDHFMEMLDHTIQIEDLEIAEETNTACMSSSMNSQASLDNTDDEQPKQPIKTTMLLKIQQNIGVIAAFTVAVLAAGISFHYFSD.

2 helical membrane-spanning segments follow: residues 82–102 (MLPGGLLVLGVFIITTLELAN) and 432–452 (IGVIAAFTVAVLAAGISFHYF).

Belongs to the ODR-4 family. In terms of tissue distribution, ubiquitously expressed.

The protein localises to the membrane. May play a role in the trafficking of a subset of G-protein coupled receptors. This chain is Protein odr-4 homolog, found in Homo sapiens (Human).